Reading from the N-terminus, the 373-residue chain is XK-related protein 9 (373 aa).

8 helical membrane-spanning segments follow: residues 8–28 (FMMS…DIWV), 38–58 (YVFS…AQCF), 166–186 (AAIM…QVAL), 203–223 (ITYL…VVLL), 224–244 (LFLN…LGII), 256–276 (CISM…FTFF), 295–315 (VLGT…IFNP), and 318–338 (FIPI…FLIV).

It belongs to the XK family. Post-translationally, undergoes proteolytic processing by caspase-3 (CASP3), caspase-6 (CASP6) and caspase-7 (CASP7) to generate the XK-related protein 9, processed form, leading to its activation.

The protein resides in the cell membrane. It carries out the reaction a 1,2-diacyl-sn-glycero-3-phospho-L-serine(in) = a 1,2-diacyl-sn-glycero-3-phospho-L-serine(out). Activated upon caspase cleavage to generate the XK-related protein 9, processed form. Does not act prior the onset of apoptosis. Functionally, phospholipid scramblase that promotes phosphatidylserine exposure on apoptotic cell surface. Phosphatidylserine is a specific marker only present at the surface of apoptotic cells and acts as a specific signal for engulfment. This is XK-related protein 9 from Pan troglodytes (Chimpanzee).